The chain runs to 396 residues: Bone morphogenetic protein 2 (396 aa).

The N-terminal stretch at 1–23 is a signal peptide; sequence MVAGTRCLLALLLPQVLLGGAAG. The propeptide at 24-282 is cleaved by PCSK5; that stretch reads LVPELGRRKF…GHPLHKREKR (259 aa). The interval 84 to 121 is disordered; that stretch reads RRHSGQPGSPAPDHRLERAASRANTVRSFHHEESLEEL. Ser-87 is modified (phosphoserine). N-linked (GlcNAc...) asparagine glycans are attached at residues Asn-135, Asn-163, Asn-164, and Asn-200. The disordered stretch occupies residues 271–293; it reads GKGHPLHKREKRQAKHKQRKRLK. Basic residues predominate over residues 274–293; the sequence is HPLHKREKRQAKHKQRKRLK. Disulfide bonds link Cys-296–Cys-361, Cys-325–Cys-393, and Cys-329–Cys-395. The N-linked (GlcNAc...) (high mannose) asparagine glycan is linked to Asn-338.

This sequence belongs to the TGF-beta family. Homodimer; disulfide-linked. Interacts with SOSTDC1. Interacts with GREM2, RGMA, RGMB and RGMC. Interacts with ASPN. Interacts with MAFP5. Interacts with FBN1 (via N-terminal domain) and FBN2. Interacts with type I receptor BMPR1A. Interacts with type II receptor BMPR2. Interacts with SCUBE3. Interacts with TNFAIP6 (primarily via Link domain); this interaction is inhibited by hyaluronan. Interacts with ERFE. Interacts with BMPR1A/ALK3; the interaction may induce HAMP expression. Forms heterodimers with BMP6 in vitro; the heterodimer then binds to its receptor BMPR1A /ALK3 and may induce HAMP expression. Interacts with TGFBR3. As to expression, particularly abundant in lung, spleen and colon and in low but significant levels in heart, brain, placenta, liver, skeletal muscle, kidney, pancreas, prostate, ovary and small intestine.

Its subcellular location is the secreted. Growth factor of the TGF-beta superfamily that plays essential roles in many developmental processes, including cardiogenesis, neurogenesis, and osteogenesis. Induces cartilage and bone formation. Initiates the canonical BMP signaling cascade by associating with type I receptor BMPR1A and type II receptor BMPR2. Once all three components are bound together in a complex at the cell surface, BMPR2 phosphorylates and activates BMPR1A. In turn, BMPR1A propagates signal by phosphorylating SMAD1/5/8 that travel to the nucleus and act as activators and repressors of transcription of target genes. Also acts to promote expression of HAMP, via the interaction with its receptor BMPR1A/ALK3. Can also signal through non-canonical pathways such as ERK/MAP kinase signaling cascade that regulates osteoblast differentiation. Also stimulates the differentiation of myoblasts into osteoblasts via the EIF2AK3-EIF2A-ATF4 pathway by stimulating EIF2A phosphorylation which leads to increased expression of ATF4 which plays a central role in osteoblast differentiation. Acts as a positive regulator of odontoblast differentiation during mesenchymal tooth germ formation, expression is repressed during the bell stage by MSX1-mediated inhibition of CTNNB1 signaling. In Homo sapiens (Human), this protein is Bone morphogenetic protein 2 (BMP2).